The chain runs to 660 residues: Replication restart protein PriA (660 aa).

The Helicase ATP-binding domain maps to 145-313 (IIGSEKTNVF…KNNQIKKIIM (169 aa)). Residue 158 to 165 (GIPGSGKT) participates in ATP binding. The short motif at 256–259 (DEEH) is the DEAH box element. Zn(2+) contacts are provided by Cys-370, Cys-373, Cys-379, Cys-382, Cys-397, Cys-400, Cys-410, and Cys-413. The region spanning 405-557 (KTASHCPQCE…QFYEEELDIR (153 aa)) is the Helicase C-terminal domain.

Belongs to the helicase family. PriA subfamily. As to quaternary structure, component of the replication restart primosome. It depends on Zn(2+) as a cofactor.

The enzyme catalyses Couples ATP hydrolysis with the unwinding of duplex DNA by translocating in the 3'-5' direction.. The catalysed reaction is ATP + H2O = ADP + phosphate + H(+). In terms of biological role, initiates the restart of stalled replication forks, which reloads the replicative helicase on sites other than the origin of replication. Recognizes and binds to abandoned replication forks and remodels them to uncover a helicase loading site. Promotes assembly of the primosome at these replication forks. The sequence is that of Replication restart protein PriA from Borreliella burgdorferi (strain ATCC 35210 / DSM 4680 / CIP 102532 / B31) (Borrelia burgdorferi).